The sequence spans 446 residues: MNAKEANFDGLVGPTHNYAGLSFGNVASLSNEKSDANPKAAAKQGLRKMKQLADLGFAQGVLPPQERPSLRLLRELGFSGKDADVIAKAARQAPELLAAASSASAMWTANAATVSPSADTGDARVHFTPANLCSKLHRAIEHESTRRTLAAIFADEARFAVHDALPGTPALGDEGAANHTRFCAEYGAPGVEFFVYGRAEYRRGPEPTRFPARQTFEASRAVAHRHGLREEATIYAQQRPDVIDAGVFHNDVIAVGNRDTLFCHEHAFVDPQAVYDALAASLGALGAQLNVIEVPDRAVSVADAVGSYLFNSQLLAREDGTQMLVVPQECRENANVAAYLDALVAGNGPIRDVRVFDLRESMKNGGGPACLRLRVVLNDAERAAVKPNVWIGDALFASLDAWIDKHYRDRLSPVDLADPALLDESRTALDELTQILGLGSLYDFQR.

Substrate is bound by residues 19 to 28 (AGLSFGNVAS), N110, and 137 to 138 (HR). The active site involves E174. R213 contributes to the substrate binding site. H249 is an active-site residue. Substrate contacts are provided by D251 and N364. C370 (nucleophile) is an active-site residue.

The protein belongs to the succinylarginine dihydrolase family. Homodimer.

It carries out the reaction N(2)-succinyl-L-arginine + 2 H2O + 2 H(+) = N(2)-succinyl-L-ornithine + 2 NH4(+) + CO2. Its pathway is amino-acid degradation; L-arginine degradation via AST pathway; L-glutamate and succinate from L-arginine: step 2/5. Its function is as follows. Catalyzes the hydrolysis of N(2)-succinylarginine into N(2)-succinylornithine, ammonia and CO(2). This chain is N-succinylarginine dihydrolase, found in Burkholderia pseudomallei (strain 668).